We begin with the raw amino-acid sequence, 354 residues long: Holliday junction branch migration complex subunit RuvB (354 aa).

Residues 4-190 are large ATPase domain (RuvB-L); sequence TDKLAAERII…FGIVARLEFY (187 aa). Residues Leu-29, Arg-30, Gly-71, Lys-74, Thr-75, Thr-76, 137-139, Arg-180, Tyr-190, and Arg-227 contribute to the ATP site; that span reads EDY. Mg(2+) is bound at residue Thr-75. A small ATPAse domain (RuvB-S) region spans residues 191–261; sequence DADQLARIVR…VADAALAMLD (71 aa). Residues 264-354 form a head domain (RuvB-H) region; it reads PVGFDLMDRK…RGMWDTPAGK (91 aa). DNA contacts are provided by Arg-300, Arg-319, and Arg-324.

It belongs to the RuvB family. Homohexamer. Forms an RuvA(8)-RuvB(12)-Holliday junction (HJ) complex. HJ DNA is sandwiched between 2 RuvA tetramers; dsDNA enters through RuvA and exits via RuvB. An RuvB hexamer assembles on each DNA strand where it exits the tetramer. Each RuvB hexamer is contacted by two RuvA subunits (via domain III) on 2 adjacent RuvB subunits; this complex drives branch migration. In the full resolvosome a probable DNA-RuvA(4)-RuvB(12)-RuvC(2) complex forms which resolves the HJ.

The protein resides in the cytoplasm. The catalysed reaction is ATP + H2O = ADP + phosphate + H(+). In terms of biological role, the RuvA-RuvB-RuvC complex processes Holliday junction (HJ) DNA during genetic recombination and DNA repair, while the RuvA-RuvB complex plays an important role in the rescue of blocked DNA replication forks via replication fork reversal (RFR). RuvA specifically binds to HJ cruciform DNA, conferring on it an open structure. The RuvB hexamer acts as an ATP-dependent pump, pulling dsDNA into and through the RuvAB complex. RuvB forms 2 homohexamers on either side of HJ DNA bound by 1 or 2 RuvA tetramers; 4 subunits per hexamer contact DNA at a time. Coordinated motions by a converter formed by DNA-disengaged RuvB subunits stimulates ATP hydrolysis and nucleotide exchange. Immobilization of the converter enables RuvB to convert the ATP-contained energy into a lever motion, pulling 2 nucleotides of DNA out of the RuvA tetramer per ATP hydrolyzed, thus driving DNA branch migration. The RuvB motors rotate together with the DNA substrate, which together with the progressing nucleotide cycle form the mechanistic basis for DNA recombination by continuous HJ branch migration. Branch migration allows RuvC to scan DNA until it finds its consensus sequence, where it cleaves and resolves cruciform DNA. This chain is Holliday junction branch migration complex subunit RuvB, found in Burkholderia ambifaria (strain MC40-6).